Consider the following 191-residue polypeptide: uncharacterized protein (191 aa).

Transmembrane regions (helical) follow at residues 24-44, 51-71, 114-134, 139-159, and 167-187; these read IVRGLIDGSLSALGVVIGASG, IIAAGLGGGIANGLSNILGAF, LIDGISTTIGSALPVVPFFLF, ALYVAIGITIAILFILGVFIG, and IISGIKMVAGALAVAILCFMI.

The protein localises to the cell membrane. This is an uncharacterized protein from Methanocaldococcus jannaschii (strain ATCC 43067 / DSM 2661 / JAL-1 / JCM 10045 / NBRC 100440) (Methanococcus jannaschii).